Consider the following 512-residue polypeptide: NAD(P)H-quinone oxidoreductase chain 4, chloroplastic (512 aa).

14 helical membrane passes run 4–24 (LPWL…IPFI), 34–54 (WYAL…FGYH), 87–107 (MPLV…AWPV), 111–131 (AKLF…VFVS), 134–154 (LLLF…LLLV), 167–187 (FILY…TMAF), 210–230 (ILLY…FPLH), 241–261 (HYST…YALI), 273–293 (LIFA…AALT), 312–332 (MGFV…GAVL), 333–353 (QMIS…TTYD), 373–395 (TFAM…GFVA), 416–436 (IITF…LSML), and 462–482 (IFVI…PKMA).

This sequence belongs to the complex I subunit 4 family.

Its subcellular location is the plastid. The protein resides in the chloroplast thylakoid membrane. It carries out the reaction a plastoquinone + NADH + (n+1) H(+)(in) = a plastoquinol + NAD(+) + n H(+)(out). The catalysed reaction is a plastoquinone + NADPH + (n+1) H(+)(in) = a plastoquinol + NADP(+) + n H(+)(out). This is NAD(P)H-quinone oxidoreductase chain 4, chloroplastic from Chlorokybus atmophyticus (Soil alga).